Consider the following 162-residue polypeptide: MPSFDIVSKVDPQTLDNALNVARKEITTRYDFRDSKTEIDLDKKASIIKVTTENSMRMNAIVDIVITRMAKQGIDAKALDMSKEEYASGPMVKRELPVKNGIDKESCKKIIKIIKDSGSKVTPAQMDDLIRVTGKKIDDLQEIIALLRSKDVGVALQFINMK.

This sequence belongs to the YajQ family.

Its function is as follows. Nucleotide-binding protein. The polypeptide is Nucleotide-binding protein CHU_2278 (Cytophaga hutchinsonii (strain ATCC 33406 / DSM 1761 / CIP 103989 / NBRC 15051 / NCIMB 9469 / D465)).